The primary structure comprises 604 residues: Nuclear factor erythroid 2-related factor 2 (604 aa).

The DLG motif signature appears at 29–31 (DLG). Serine 40 carries the post-translational modification Phosphoserine; by PKC. The ETGE motif signature appears at 79–82 (ETGE). Residue serine 214 is modified to Phosphoserine. A disordered region spans residues 334-447 (TVEFNDSDSG…VPFTKDKHSS (114 aa)). Composition is skewed to polar residues over residues 340–352 (SDSG…SPSR) and 395–407 (PTHS…QPLS). Residues lysine 461, lysine 471, and lysine 486 are each glycosylated (N-linked (Glc) (glycation) lysine). A bZIP domain is found at 496 to 559 (LIRDIRRRGK…HLLKRKLSTL (64 aa)). Residue arginine 498 is glycosylated (N-linked (Glc) (glycation) arginine). Residues 498–517 (RDIRRRGKNKVAAQNCRKRK) form a basic motif region. Positions 521–528 (IVELEQDL) are leucine-zipper. Arginine 568 carries an N-linked (Glc) (glycation) arginine glycan. The tract at residues 570–604 (EDGKPYSPSEYSLQQTRDGNVFLVPKSKKPDTKKN) is disordered. A glycan (N-linked (Glc) (glycation) lysine) is linked at lysine 573. Over residues 578 to 587 (SEYSLQQTRD) the composition is skewed to polar residues. The segment at 590-595 (VFLVPK) is mediates interaction with CHD6 and is necessary to activate transcription. N6-acetyllysine; by CREBBP is present on residues lysine 595 and lysine 598.

It belongs to the bZIP family. CNC subfamily. In terms of assembly, heterodimer; heterodimerizes with small Maf proteins. Interacts (via the bZIP domain) with MAFG and MAFK; required for binding to antioxidant response elements (AREs) on DNA. Interacts with KEAP1; the interaction is direct and promotes ubiquitination by the BCR(KEAP1) E3 ubiquitin ligase complex. Forms a ternary complex with PGAM5 and KEAP1. Interacts with EEF1D at heat shock promoter elements (HSE). Interacts via its leucine-zipper domain with the coiled-coil domain of PMF1. Interacts with CHD6; involved in activation of the transcription. Interacts with ESRRB; represses NFE2L2 transcriptional activity. Interacts with MOTS-c, a peptide produced by the mitochondrially encoded 12S rRNA MT-RNR1; the interaction occurs in the nucleus following metabolic stress. Ubiquitinated in the cytoplasm by the BCR(KEAP1) E3 ubiquitin ligase complex leading to its degradation. In response to oxidative stress, electrophile metabolites, such as sulforaphane, modify KEAP1, leading to inhibit activity of the BCR(KEAP1) complex, promoting NFE2L2/NRF2 nuclear accumulation and activity. In response to autophagy, the BCR(KEAP1) complex is inactivated. In terms of processing, phosphorylated by EIF2AK3/PERK following unfolded protein response (UPR), promoting dissociation from its cytoplasmic inhibitor KEAP1, followed by its translocation into the nucleus. Phosphorylation of Ser-40 by PKC in response to oxidative stress dissociates NFE2L2 from its cytoplasmic inhibitor KEAP1, promoting its translocation into the nucleus. Post-translationally, acetylation at Lys-595 and Lys-598 increases nuclear localization whereas deacetylation by SIRT1 enhances cytoplasmic presence. Glycation impairs transcription factor activity by preventing heterodimerization with small Maf proteins. Deglycation by FN3K restores activity.

Its subcellular location is the cytoplasm. It localises to the cytosol. The protein resides in the nucleus. Its function is as follows. Transcription factor that plays a key role in the response to oxidative stress: binds to antioxidant response (ARE) elements present in the promoter region of many cytoprotective genes, such as phase 2 detoxifying enzymes, and promotes their expression, thereby neutralizing reactive electrophiles. In normal conditions, ubiquitinated and degraded in the cytoplasm by the BCR(KEAP1) complex. In response to oxidative stress, electrophile metabolites inhibit activity of the BCR(KEAP1) complex, promoting nuclear accumulation of NFE2L2/NRF2, heterodimerization with one of the small Maf proteins and binding to ARE elements of cytoprotective target genes. The NFE2L2/NRF2 pathway is also activated in response to selective autophagy: autophagy promotes interaction between KEAP1 and SQSTM1/p62 and subsequent inactivation of the BCR(KEAP1) complex, leading to NFE2L2/NRF2 nuclear accumulation and expression of cytoprotective genes. The NFE2L2/NRF2 pathway is also activated during the unfolded protein response (UPR), contributing to redox homeostasis and cell survival following endoplasmic reticulum stress. May also be involved in the transcriptional activation of genes of the beta-globin cluster by mediating enhancer activity of hypersensitive site 2 of the beta-globin locus control region. Also plays an important role in the regulation of the innate immune response. It is a critical regulator of the innate immune response and survival during sepsis by maintaining redox homeostasis and restraint of the dysregulation of pro-inflammatory signaling pathways like MyD88-dependent and -independent and TNF-alpha signaling. Suppresses macrophage inflammatory response by blocking pro-inflammatory cytokine transcription and the induction of IL6. Binds to the proximity of pro-inflammatory genes in macrophages and inhibits RNA Pol II recruitment. The inhibition is independent of the Nrf2-binding motif and reactive oxygen species level. Represses antiviral cytosolic DNA sensing by suppressing the expression of the adapter protein STING1 and decreasing responsiveness to STING1 agonists while increasing susceptibility to infection with DNA viruses. The sequence is that of Nuclear factor erythroid 2-related factor 2 from Rattus norvegicus (Rat).